The primary structure comprises 367 residues: Apolipoprotein A-V (367 aa).

An N-terminal signal peptide occupies residues 1–20; the sequence is MAAVITWALALLSVFATVQA. Ser-52 bears the Phosphoserine mark. Residues 231–255 adopt a coiled-coil conformation; it reads TRKAKDLHTSIQRNLDQLRDELSTF. The tract at residues 305–332 is disordered; it reads EEIQHQLAPPPPSHSAFAPELGHSDSNK.

The protein belongs to the apolipoprotein A1/A4/E family. In terms of assembly, interacts with GPIHBP1. Interacts with SORL1; this interaction leads to APOA5 internalization and sorting either to lysosomes and degradation, or to the trans-Golgi network. In terms of processing, phosphorylated by FAM20C in the extracellular medium. In terms of tissue distribution, liver.

It localises to the secreted. The protein localises to the early endosome. It is found in the late endosome. Its subcellular location is the golgi apparatus. The protein resides in the trans-Golgi network. Minor apolipoprotein mainly associated with HDL and to a lesser extent with VLDL. May also be associated with chylomicrons. Important determinant of plasma triglyceride (TG) levels by both being a potent stimulator of apo-CII lipoprotein lipase (LPL) TG hydrolysis and an inhibitor of the hepatic VLDL-TG production rate (without affecting the VLDL-apoB production rate). Activates poorly lecithin:cholesterol acyltransferase (LCAT) and does not enhance efflux of cholesterol from macrophages. Binds heparin. The protein is Apolipoprotein A-V (Apoa5) of Rattus norvegicus (Rat).